Consider the following 126-residue polypeptide: Small ribosomal subunit protein uS13 (126 aa).

The interval 95–126 (GLPVRGQRTRTNARTRKGPRKTVAGKKKAPRK) is disordered.

Belongs to the universal ribosomal protein uS13 family. In terms of assembly, part of the 30S ribosomal subunit. Forms a loose heterodimer with protein S19. Forms two bridges to the 50S subunit in the 70S ribosome.

In terms of biological role, located at the top of the head of the 30S subunit, it contacts several helices of the 16S rRNA. In the 70S ribosome it contacts the 23S rRNA (bridge B1a) and protein L5 of the 50S subunit (bridge B1b), connecting the 2 subunits; these bridges are implicated in subunit movement. Contacts the tRNAs in the A and P-sites. This chain is Small ribosomal subunit protein uS13 (rpsM), found in Thermus thermophilus (strain ATCC BAA-163 / DSM 7039 / HB27).